A 511-amino-acid polypeptide reads, in one-letter code: 2,3-bisphosphoglycerate-independent phosphoglycerate mutase (511 aa).

Asp14 and Ser64 together coordinate Mn(2+). Residue Ser64 is the Phosphoserine intermediate of the active site. Substrate contacts are provided by residues His125, 155-156, Arg187, Arg193, 259-262, and Lys333; these read RD and RADR. The Mn(2+) site is built by Asp400, His404, Asp441, His442, and His460.

It belongs to the BPG-independent phosphoglycerate mutase family. As to quaternary structure, monomer. Requires Mn(2+) as cofactor.

The enzyme catalyses (2R)-2-phosphoglycerate = (2R)-3-phosphoglycerate. It participates in carbohydrate degradation; glycolysis; pyruvate from D-glyceraldehyde 3-phosphate: step 3/5. Its function is as follows. Catalyzes the interconversion of 2-phosphoglycerate and 3-phosphoglycerate. In Pseudomonas putida (strain ATCC 47054 / DSM 6125 / CFBP 8728 / NCIMB 11950 / KT2440), this protein is 2,3-bisphosphoglycerate-independent phosphoglycerate mutase.